A 175-amino-acid polypeptide reads, in one-letter code: ATP synthase subunit b, chloroplastic (175 aa).

Residues 21–40 (LLESNVINIIILISLLIYLG) form a helical membrane-spanning segment.

It belongs to the ATPase B chain family. In terms of assembly, F-type ATPases have 2 components, F(1) - the catalytic core - and F(0) - the membrane proton channel. F(1) has five subunits: alpha(3), beta(3), gamma(1), delta(1), epsilon(1). F(0) has four main subunits: a(1), b(1), b'(1) and c(10-14). The alpha and beta chains form an alternating ring which encloses part of the gamma chain. F(1) is attached to F(0) by a central stalk formed by the gamma and epsilon chains, while a peripheral stalk is formed by the delta, b and b' chains.

The protein localises to the plastid. Its subcellular location is the chloroplast thylakoid membrane. Functionally, f(1)F(0) ATP synthase produces ATP from ADP in the presence of a proton or sodium gradient. F-type ATPases consist of two structural domains, F(1) containing the extramembraneous catalytic core and F(0) containing the membrane proton channel, linked together by a central stalk and a peripheral stalk. During catalysis, ATP synthesis in the catalytic domain of F(1) is coupled via a rotary mechanism of the central stalk subunits to proton translocation. In terms of biological role, component of the F(0) channel, it forms part of the peripheral stalk, linking F(1) to F(0). The sequence is that of ATP synthase subunit b, chloroplastic from Cyanidium caldarium (Red alga).